The primary structure comprises 792 residues: Ribonucleoside-diphosphate reductase large subunit (792 aa).

The ATP-cone domain occupies 1–92; that stretch reads MHVIKRDGRQ…VSNLHKETKK (92 aa). ATP-binding positions include 5 to 6, 11 to 17, T53, and D57; these read KR and ERVMFDK. K17 is modified (N6-acetyllysine). GDP contacts are provided by S202 and S217. C218 and C444 are joined by a disulfide. Residues 226 to 228, K243, R256, and 263 to 264 contribute to the dTTP site; these read DSI and AG. N6-acetyllysine is present on K376. GDP is bound at residue N427. N427 serves as the catalytic Proton acceptor. Residue C429 is the Cysteine radical intermediate of the active site. GDP contacts are provided by residues E431 and 604–607; that span reads TAST. The active-site Proton acceptor is E431. At T751 the chain carries Phosphothreonine.

The protein belongs to the ribonucleoside diphosphate reductase large chain family. Heterodimer of a large and a small subunit. Heterodimer with small subunit RRM2 or RRM2B. The heterodimer with RRM2 has higher catalytic activity than the heterodimer with RRM2B. Interacts with AHCYL1 which inhibits its activity.

The protein resides in the cytoplasm. The enzyme catalyses a 2'-deoxyribonucleoside 5'-diphosphate + [thioredoxin]-disulfide + H2O = a ribonucleoside 5'-diphosphate + [thioredoxin]-dithiol. Under complex allosteric control mediated by deoxynucleoside triphosphates and ATP binding to separate specificity and activation sites on the M1 subunit. The type of nucleotide bound at the specificity site determines substrate preference. It seems probable that ATP makes the enzyme reduce CDP and UDP, dGTP favors ADP reduction and dTTP favors GDP reduction. Stimulated by ATP and inhibited by dATP binding to the activity site, the dATP inhibition is mediated by AHCYL1 which stabilizes dATP in the site. In terms of biological role, provides the precursors necessary for DNA synthesis. Catalyzes the biosynthesis of deoxyribonucleotides from the corresponding ribonucleotides. The protein is Ribonucleoside-diphosphate reductase large subunit (RRM1) of Homo sapiens (Human).